Reading from the N-terminus, the 152-residue chain is MKCPKCGSLNDKVVDTRQSKDGTVIRRRRECLDCGYRFTTYERFEEEKIVVKKKNGTTEPFNKDKIIRGIRLASKNRPVSEKQMVEIADEIEKYLLEEGKLVVESTEIGDLVQEKLKKIDPVSYLRFKSVYNEFQDIKDFEKALKEIEEKGE.

Residues 3–34 (CPKCGSLNDKVVDTRQSKDGTVIRRRRECLDC) fold into a zinc finger. The ATP-cone domain occupies 49–139 (IVVKKKNGTT…VYNEFQDIKD (91 aa)).

It belongs to the NrdR family. Zn(2+) serves as cofactor.

Negatively regulates transcription of bacterial ribonucleotide reductase nrd genes and operons by binding to NrdR-boxes. The sequence is that of Transcriptional repressor NrdR from Persephonella marina (strain DSM 14350 / EX-H1).